A 315-amino-acid chain; its full sequence is Archaeosortase A (315 aa).

7 consecutive transmembrane segments (helical) span residues 12 to 32 (VIPY…AGVA), 47 to 67 (AGAW…FAFV), 74 to 94 (TVLI…VFAG), 173 to 193 (VVFE…IAAV), 204 to 224 (IALS…FIAL), 227 to 247 (GYQW…FGLT), and 260 to 280 (VLAQ…IARW). The active-site Acyl-thioester intermediate is the Cys-177. Residue Arg-218 is the Proton donor of the active site.

Belongs to the exosortase/archaeosortase family. Archaeosortase A subfamily.

The protein localises to the cell membrane. Transpeptidase that recognizes and modifies its substrate by proteolytic cleavage of a sorting signal. Following cleavage, a covalent intermediate is formed via a thioester bond between the archaeosortase and its substrate, which is then transferred and covalently attached to the cell membrane. The sequence is that of Archaeosortase A from Natronomonas pharaonis (strain ATCC 35678 / DSM 2160 / CIP 103997 / JCM 8858 / NBRC 14720 / NCIMB 2260 / Gabara) (Halobacterium pharaonis).